The primary structure comprises 241 residues: F-box protein At3g22350 (241 aa).

The F-box domain maps to 1–44; it reads MSDLPLDLVEEILSRVSATSLKRLRSTCKQWNTLFKKRSFSQKH.

The sequence is that of F-box protein At3g22350 from Arabidopsis thaliana (Mouse-ear cress).